Here is a 263-residue protein sequence, read N- to C-terminus: MTVCVAQAERGASELESKAMVKKSNDAALLVAHRIAEVVRSKPNCVLGLATGSTPIPVYQELARLHREEGLDFSQVRTFNLDEYAGLPPTHDQSYRFFMEEHLFSKVNIKPENVHFLSGLAIRAEDECIRYENALQTIGPCDVWLLGIGHNGHIAFNEPGSPRDSRTRVVCLTQSTIDANARFFGNDKSKVPTKALSVGIATIMESREILLLATGESKCEAVTKAIVGEPTNAVPASLLQRHPRCCFYVDEAAGAEVAETVTE.

Catalysis depends on Asp82, which acts as the Proton acceptor; for enolization step. Catalysis depends on Asn151, which acts as the For ring-opening step. His153 functions as the Proton acceptor; for ring-opening step in the catalytic mechanism. The active-site For ring-opening step is Glu158.

Belongs to the glucosamine/galactosamine-6-phosphate isomerase family. Homohexamer.

The catalysed reaction is alpha-D-glucosamine 6-phosphate + H2O = beta-D-fructose 6-phosphate + NH4(+). In terms of biological role, catalyzes the reversible conversion of alpha-D-glucosamine 6-phosphate (GlcN-6P) into beta-D-fructose 6-phosphate (Fru-6P) and ammonium ion, a regulatory reaction step in de novo uridine diphosphate-N-acetyl-alpha-D-glucosamine (UDP-GlcNAc) biosynthesis via hexosamine pathway. The sequence is that of Glucosamine-6-phosphate deaminase 2 (GPI2) from Giardia intestinalis (Giardia lamblia).